Here is a 423-residue protein sequence, read N- to C-terminus: Histidine--tRNA ligase (423 aa).

This sequence belongs to the class-II aminoacyl-tRNA synthetase family. Homodimer.

The protein resides in the cytoplasm. It carries out the reaction tRNA(His) + L-histidine + ATP = L-histidyl-tRNA(His) + AMP + diphosphate + H(+). In Haemophilus ducreyi (strain 35000HP / ATCC 700724), this protein is Histidine--tRNA ligase.